We begin with the raw amino-acid sequence, 672 residues long: ATP-dependent zinc metalloprotease FtsH 1 (672 aa).

Positions 1–22 (MKKDSESNSSDKSNKEELSTGR) are disordered. Residues 1–23 (MKKDSESNSSDKSNKEELSTGRR) are Cytoplasmic-facing. A helical membrane pass occupies residues 24–44 (GGNPMIIALVITVLAAMLFFN). The Periplasmic portion of the chain corresponds to 45 to 141 (QPEPSSLISA…KFSPPDNTAA (97 aa)). A helical membrane pass occupies residues 142 to 162 (ILNLLILVGLPLAIFFFIFMM). The Cytoplasmic portion of the chain corresponds to 163–672 (IRRTRNDMMG…TSNASARRED (510 aa)). 237–244 (GPPGTGKT) provides a ligand contact to ATP. His-458 serves as a coordination point for Zn(2+). Glu-459 is a catalytic residue. Positions 462 and 534 each coordinate Zn(2+). A disordered region spans residues 642–672 (RLGDEEGKVEQIMAPEGAAERTSNASARRED). The span at 662–672 (RTSNASARRED) shows a compositional bias: polar residues.

This sequence in the central section; belongs to the AAA ATPase family. The protein in the C-terminal section; belongs to the peptidase M41 family. As to quaternary structure, homohexamer. The cofactor is Zn(2+).

The protein resides in the cell inner membrane. Functionally, acts as a processive, ATP-dependent zinc metallopeptidase for both cytoplasmic and membrane proteins. Plays a role in the quality control of integral membrane proteins. The polypeptide is ATP-dependent zinc metalloprotease FtsH 1 (Rhodopirellula baltica (strain DSM 10527 / NCIMB 13988 / SH1)).